The chain runs to 316 residues: MVEIKDSSNVRKLKEEFLRDFKRFDTVEDFSDHHYAAEGSPAKLSLWHLKFKGRPKNWVKDIQKEWKILDKNLPETIFVRACESRIDLLRAVIIGAEGTPYHDGLFFFDIQFPDTYPSVPPKVHYHSGGLRINPNLYKCGKVCLSLISTWTGKKREKWLPKESTMLQLLVSIQALILNEKPYYNEPGYEKSMGTPLGESYSKDYSENVFVFSLKTMHFEEFVRSHFFVRSHDIVKACNAYKDGAPVGSIDKGGVKKQTRQRGSLKFRINVTSFMKTVVDEFVNLGAIREANHRGEPNPTLFSCFFFCYLELIICSV.

The region spanning 57-217 (NWVKDIQKEW…VFVFSLKTMH (161 aa)) is the UBC core domain. Cysteine 143 serves as the catalytic Glycyl thioester intermediate.

Belongs to the ubiquitin-conjugating enzyme family.

It carries out the reaction S-ubiquitinyl-[E1 ubiquitin-activating enzyme]-L-cysteine + [E2 ubiquitin-conjugating enzyme]-L-cysteine = [E1 ubiquitin-activating enzyme]-L-cysteine + S-ubiquitinyl-[E2 ubiquitin-conjugating enzyme]-L-cysteine.. The protein operates within protein modification; protein ubiquitination. Accepts the ubiquitin from the E1 complex and catalyzes its covalent attachment to other proteins. The protein is Putative ubiquitin-conjugating enzyme E2 39 (UBC39) of Arabidopsis thaliana (Mouse-ear cress).